The sequence spans 249 residues: Aspartate/glutamate leucyltransferase (249 aa).

The protein belongs to the R-transferase family. Bpt subfamily.

It localises to the cytoplasm. It catalyses the reaction N-terminal L-glutamyl-[protein] + L-leucyl-tRNA(Leu) = N-terminal L-leucyl-L-glutamyl-[protein] + tRNA(Leu) + H(+). The enzyme catalyses N-terminal L-aspartyl-[protein] + L-leucyl-tRNA(Leu) = N-terminal L-leucyl-L-aspartyl-[protein] + tRNA(Leu) + H(+). Functionally, functions in the N-end rule pathway of protein degradation where it conjugates Leu from its aminoacyl-tRNA to the N-termini of proteins containing an N-terminal aspartate or glutamate. This Xanthobacter autotrophicus (strain ATCC BAA-1158 / Py2) protein is Aspartate/glutamate leucyltransferase.